Reading from the N-terminus, the 194-residue chain is N-acetyltransferase (194 aa).

Residues 9–173 (PQVRPGIAED…GRYWDVRWYE (165 aa)) enclose the N-acetyltransferase domain.

This sequence belongs to the acetyltransferase family. PAT/BAR subfamily.

The sequence is that of N-acetyltransferase (nat) from Streptomyces griseus.